Reading from the N-terminus, the 274-residue chain is Glutamate--cysteine ligase regulatory subunit (274 aa).

Serine 59 is subject to Phosphoserine. At lysine 263 the chain carries N6-acetyllysine.

Belongs to the aldo/keto reductase family. Glutamate--cysteine ligase light chain subfamily. As to quaternary structure, heterodimer of a catalytic heavy chain and a regulatory light chain.

The protein operates within sulfur metabolism; glutathione biosynthesis; glutathione from L-cysteine and L-glutamate: step 1/2. This chain is Glutamate--cysteine ligase regulatory subunit (Gclm), found in Mus musculus (Mouse).